Reading from the N-terminus, the 2322-residue chain is Protein sidekick homolog (2322 aa).

The signal sequence occupies residues 1 to 26; the sequence is MNYRIFLLFCTTTVLWSVVSTQLVLG. At 27 to 2020 the chain is on the extracellular side; that stretch reads KPPIFQNTGP…IPDDPFYTTW (1994 aa). 3 Ig-like C2-type domains span residues 28-105, 217-319, and 324-397; these read PPIF…AAIS, PSLQ…AYLT, and PVLK…ADMS. Cystine bridges form between Cys52-Cys94, Cys247-Cys301, and Cys345-Cys386. A glycan (N-linked (GlcNAc...) asparagine) is linked at Asn408. Ig-like C2-type domains follow at residues 450 to 545 and 548 to 639; these read PFTS…VQVN and SLIE…AMLQ. Cystine bridges form between Cys481-Cys529 and Cys569-Cys623. N-linked (GlcNAc...) asparagine glycosylation is found at Asn633 and Asn656. 13 consecutive Fibronectin type-III domains span residues 646–752, 757–854, 859–958, 962–1056, 1060–1155, 1160–1255, 1260–1360, 1364–1458, 1464–1567, 1572–1672, 1674–1774, 1777–1873, and 1908–2010; these read MPER…MPQQ, APRN…TAEG, APKN…TEED, AVDE…VPPE, RPSM…TLQT, PSQR…TYES, SPRN…TLED, PPES…SSVR, APAP…TLPS, QPIS…VGYS, PKRN…LEDK, PVGV…SKDG, and QAKR…VPES. The interval 732 to 762 is disordered; that stretch reads SNKHGPGKPSLPSSSVTMPQQPPSAAPRNVA. Asn808, Asn869, Asn933, and Asn1017 each carry an N-linked (GlcNAc...) asparagine glycan. The span at 1040-1049 shows a compositional bias: basic and acidic residues; that stretch reads GDGPVEETKF. Positions 1040–1060 are disordered; it reads GDGPVEETKFESGVPPELPGR. The N-linked (GlcNAc...) asparagine glycan is linked to Asn1108. Positions 1139-1163 are disordered; that stretch reads GRGAPSEPSRTFETLQTNPETPSQR. Positions 1146-1163 are enriched in polar residues; it reads PSRTFETLQTNPETPSQR. Asn1615, Asn1677, and Asn1864 each carry an N-linked (GlcNAc...) asparagine glycan. Residues 1916–1965 are disordered; that stretch reads EETENGYVSQRPRRNEIRGAKSAAQTSASSNSNRPTHPIGEWITLRPTDG. Residues 1935 to 1947 are compositionally biased toward low complexity; it reads AKSAAQTSASSNS. A helical transmembrane segment spans residues 2021–2041; the sequence is WFMALVAMAAFVLIVIIIAIL. Over 2042-2322 the chain is Cytoplasmic; it reads CVTGSSAKYR…NLTAGFSSFV (281 aa). Disordered stretches follow at residues 2081 to 2114, 2167 to 2254, and 2276 to 2322; these read NMTR…SVLG, YVVS…ADDI, and MVRA…SSFV. The segment covering 2092-2101 has biased composition (polar residues); sequence PGTTQSWLSD. Over residues 2207–2223 the composition is skewed to low complexity; sequence PSSSGGSQPQGSPQQQQ. Residues 2227 to 2238 show a composition bias toward acidic residues; sequence DSFDEEDDVDDD. Composition is skewed to polar residues over residues 2282 to 2302 and 2310 to 2322; these read LTNQ…STSE and ATPN…SSFV.

This sequence belongs to the sidekick family.

Its subcellular location is the membrane. In terms of biological role, cell adhesion protein. This chain is Protein sidekick homolog (rig-4), found in Caenorhabditis briggsae.